We begin with the raw amino-acid sequence, 570 residues long: Sulfite reductase [NADPH] hemoprotein beta-component (570 aa).

[4Fe-4S] cluster-binding residues include Cys434, Cys440, Cys479, and Cys483. A siroheme-binding site is contributed by Cys483.

Belongs to the nitrite and sulfite reductase 4Fe-4S domain family. In terms of assembly, alpha(8)-beta(8). The alpha component is a flavoprotein, the beta component is a hemoprotein. It depends on siroheme as a cofactor. [4Fe-4S] cluster is required as a cofactor.

The catalysed reaction is hydrogen sulfide + 3 NADP(+) + 3 H2O = sulfite + 3 NADPH + 4 H(+). Its pathway is sulfur metabolism; hydrogen sulfide biosynthesis; hydrogen sulfide from sulfite (NADPH route): step 1/1. Functionally, component of the sulfite reductase complex that catalyzes the 6-electron reduction of sulfite to sulfide. This is one of several activities required for the biosynthesis of L-cysteine from sulfate. This is Sulfite reductase [NADPH] hemoprotein beta-component from Escherichia coli O9:H4 (strain HS).